The following is a 335-amino-acid chain: Geranylgeranyl pyrophosphate synthase BTS1 (335 aa).

Positions 36, 39, and 68 each coordinate isopentenyl diphosphate. D75 and D79 together coordinate Mg(2+). Dimethylallyl diphosphate is bound at residue R84. Residue R85 participates in isopentenyl diphosphate binding. 6 residues coordinate dimethylallyl diphosphate: K169, T170, Q206, N213, K223, and K233.

It belongs to the FPP/GGPP synthase family. The cofactor is Mg(2+).

Its subcellular location is the cytoplasm. The enzyme catalyses isopentenyl diphosphate + dimethylallyl diphosphate = (2E)-geranyl diphosphate + diphosphate. The catalysed reaction is isopentenyl diphosphate + (2E)-geranyl diphosphate = (2E,6E)-farnesyl diphosphate + diphosphate. It carries out the reaction isopentenyl diphosphate + (2E,6E)-farnesyl diphosphate = (2E,6E,10E)-geranylgeranyl diphosphate + diphosphate. Its pathway is isoprenoid biosynthesis; farnesyl diphosphate biosynthesis; farnesyl diphosphate from geranyl diphosphate and isopentenyl diphosphate: step 1/1. It functions in the pathway isoprenoid biosynthesis; geranyl diphosphate biosynthesis; geranyl diphosphate from dimethylallyl diphosphate and isopentenyl diphosphate: step 1/1. The protein operates within isoprenoid biosynthesis; geranylgeranyl diphosphate biosynthesis; geranylgeranyl diphosphate from farnesyl diphosphate and isopentenyl diphosphate: step 1/1. In terms of biological role, catalyzes the trans-addition of the 3 molecules of IPP onto DMAPP to form geranylgeranyl pyrophosphate. Required for the membrane attachment of YPT1 and SEC4. May be involved in vesicle trafficking and protein sorting. In Saccharomyces cerevisiae (strain ATCC 204508 / S288c) (Baker's yeast), this protein is Geranylgeranyl pyrophosphate synthase BTS1 (BTS1).